The primary structure comprises 346 residues: Methylthioribose-1-phosphate isomerase (346 aa).

Substrate contacts are provided by residues 50 to 52, R93, and Q196; that span reads RGA. Residue D237 is the Proton donor of the active site. 247–248 lines the substrate pocket; that stretch reads NK.

This sequence belongs to the eIF-2B alpha/beta/delta subunits family. MtnA subfamily.

It catalyses the reaction 5-(methylsulfanyl)-alpha-D-ribose 1-phosphate = 5-(methylsulfanyl)-D-ribulose 1-phosphate. It functions in the pathway amino-acid biosynthesis; L-methionine biosynthesis via salvage pathway; L-methionine from S-methyl-5-thio-alpha-D-ribose 1-phosphate: step 1/6. Catalyzes the interconversion of methylthioribose-1-phosphate (MTR-1-P) into methylthioribulose-1-phosphate (MTRu-1-P). The chain is Methylthioribose-1-phosphate isomerase from Alkalilimnicola ehrlichii (strain ATCC BAA-1101 / DSM 17681 / MLHE-1).